The chain runs to 299 residues: Ribonuclease 3-like protein 3 (299 aa).

Positions valine 39–asparagine 183 constitute an RNase III domain. 3 residues coordinate Mg(2+): glutamate 79, aspartate 169, and glutamate 172. The DRBM domain occupies histidine 209–glutamate 273. The disordered stretch occupies residues threonine 274–serine 299. Residues leucine 275 to phenylalanine 291 show a composition bias toward polar residues.

It depends on Mg(2+) as a cofactor. Mn(2+) serves as cofactor.

Its function is as follows. Cleaves double-stranded RNA (dsRNA). This chain is Ribonuclease 3-like protein 3, found in Oryza sativa subsp. japonica (Rice).